The sequence spans 243 residues: Ribosomal RNA small subunit methyltransferase G (243 aa).

Residues glycine 97, leucine 102, 148-149 (VE), and arginine 161 each bind S-adenosyl-L-methionine.

It belongs to the methyltransferase superfamily. RNA methyltransferase RsmG family.

The protein resides in the cytoplasm. The catalysed reaction is guanosine(527) in 16S rRNA + S-adenosyl-L-methionine = N(7)-methylguanosine(527) in 16S rRNA + S-adenosyl-L-homocysteine. Its function is as follows. Specifically methylates the N7 position of guanine in position 527 of 16S rRNA. The protein is Ribosomal RNA small subunit methyltransferase G of Paracidovorax citrulli (strain AAC00-1) (Acidovorax citrulli).